The sequence spans 116 residues: U11-theraphotoxin-Hhn1b (116 aa).

A signal peptide spans 1–21 (MNTVRVAFLLVFVLAVSLGQA). The propeptide occupies 22–74 (DKDENRMEMQEKTEQGKSYLDFAENLLLQKLEELEAKLLEEDSEESRNSRQKR). Positions 61–83 (EEDSEESRNSRQKRCIGEGVPCD) are disordered. Intrachain disulfides connect Cys75–Cys90, Cys82–Cys95, and Cys89–Cys110.

It belongs to the neurotoxin 14 (magi-1) family. 01 (HNTX-16) subfamily. In terms of tissue distribution, expressed by the venom gland.

Its subcellular location is the secreted. Functionally, probable ion channel inhibitor. In Cyriopagopus hainanus (Chinese bird spider), this protein is U11-theraphotoxin-Hhn1b.